Here is a 362-residue protein sequence, read N- to C-terminus: 3-dehydroquinate synthase (362 aa).

Residues 74 to 79, 108 to 112, 132 to 133, K145, K154, and 172 to 175 each bind NAD(+); these read DGEGYK, GVIGD, TT, and TLDT. Positions 187, 250, and 267 each coordinate Zn(2+).

This sequence belongs to the sugar phosphate cyclases superfamily. Dehydroquinate synthase family. Requires Co(2+) as cofactor. The cofactor is Zn(2+). NAD(+) is required as a cofactor.

It is found in the cytoplasm. It carries out the reaction 7-phospho-2-dehydro-3-deoxy-D-arabino-heptonate = 3-dehydroquinate + phosphate. It participates in metabolic intermediate biosynthesis; chorismate biosynthesis; chorismate from D-erythrose 4-phosphate and phosphoenolpyruvate: step 2/7. Catalyzes the conversion of 3-deoxy-D-arabino-heptulosonate 7-phosphate (DAHP) to dehydroquinate (DHQ). This chain is 3-dehydroquinate synthase, found in Citrifermentans bemidjiense (strain ATCC BAA-1014 / DSM 16622 / JCM 12645 / Bem) (Geobacter bemidjiensis).